The primary structure comprises 349 residues: Putative F-box/LRR-repeat protein At3g16555 (349 aa).

One can recognise an F-box domain in the interval 1–48 (MVLLPWELEEDILSRLPPRSLVQFRSVCKRWNALFDVKSFNKDQFARA). One copy of the LRR repeat lies at 267 to 290 (VVWISLLTLPPNNLPNLFIVCYGI).

This chain is Putative F-box/LRR-repeat protein At3g16555, found in Arabidopsis thaliana (Mouse-ear cress).